The primary structure comprises 240 residues: Sugar fermentation stimulation protein homolog (240 aa).

This sequence belongs to the SfsA family.

The protein is Sugar fermentation stimulation protein homolog of Saccharolobus islandicus (strain L.S.2.15 / Lassen #1) (Sulfolobus islandicus).